Consider the following 139-residue polypeptide: Small ribosomal subunit protein uS11 (139 aa).

This sequence belongs to the universal ribosomal protein uS11 family. Part of the 30S ribosomal subunit.

Its function is as follows. Located on the platform of the 30S subunit. This Pyrobaculum islandicum (strain DSM 4184 / JCM 9189 / GEO3) protein is Small ribosomal subunit protein uS11.